Reading from the N-terminus, the 435-residue chain is Ribulose bisphosphate carboxylase/oxygenase activase 2, chloroplastic (435 aa).

A chloroplast-targeting transit peptide spans 1-56 (MAAAYSTVGAVNRAPLSLNGSGARASLVPSTAFFGSSLKKSAAKFPKASSGNFKIV). An ATP-binding site is contributed by 165-172 (GGKGQGKS).

It belongs to the RuBisCO activase family.

The protein resides in the plastid. Its subcellular location is the chloroplast stroma. Functionally, activation of RuBisCO (ribulose-1,5-bisphosphate carboxylase/oxygenase; EC 4.1.1.39) involves the ATP-dependent carboxylation of the epsilon-amino group of lysine leading to a carbamate structure. The protein is Ribulose bisphosphate carboxylase/oxygenase activase 2, chloroplastic (RCA2) of Larrea tridentata (Creosote bush).